Consider the following 535-residue polypeptide: Peptide chain release factor 3 (535 aa).

The 271-residue stretch at 8-278 (ARRRTFAIIS…VDQAPAPGPR (271 aa)) folds into the tr-type G domain. GTP contacts are provided by residues 17-24 (SHPDAGKT), 85-89 (DTPGH), and 139-142 (NKLD).

Belongs to the TRAFAC class translation factor GTPase superfamily. Classic translation factor GTPase family. PrfC subfamily.

It is found in the cytoplasm. Its function is as follows. Increases the formation of ribosomal termination complexes and stimulates activities of RF-1 and RF-2. It binds guanine nucleotides and has strong preference for UGA stop codons. It may interact directly with the ribosome. The stimulation of RF-1 and RF-2 is significantly reduced by GTP and GDP, but not by GMP. The protein is Peptide chain release factor 3 of Bordetella parapertussis (strain 12822 / ATCC BAA-587 / NCTC 13253).